The chain runs to 137 residues: MAPSKSIKSVVICVLILGLVLEQVQVEGKSCCKDTLARNCYNTCHFAGGSRPVCAGACRCKIISGPKCPSDYPKLNLLPESGEPDVTQYCTIGCRNSVCDNMDNVFRGQEMKFDMGLCSNACARFCNDGAVIQSVEA.

The first 28 residues, 1–28 (MAPSKSIKSVVICVLILGLVLEQVQVEG), serve as a signal peptide directing secretion. 4 disulfides stabilise this stretch: cysteine 31/cysteine 68, cysteine 32/cysteine 60, cysteine 40/cysteine 58, and cysteine 44/cysteine 54. A propeptide spans 75 to 137 (LNLLPESGEP…DGAVIQSVEA (63 aa)) (acidic domain).

It belongs to the plant thionin (TC 1.C.44) family. 4 C-C subfamily.

It is found in the secreted. Thionins are small plant proteins which are toxic to animal cells. They seem to exert their toxic effect at the level of the cell membrane. Their precise function is not known. The sequence is that of Leaf-specific thionin DB4 (THI1.3) from Hordeum vulgare (Barley).